Here is a 243-residue protein sequence, read N- to C-terminus: Probable fructoselysine utilization operon transcriptional repressor (243 aa).

In terms of domain architecture, HTH gntR-type spans 10–78; it reads QLLYATVRQR…QGKGTFVQSQ (69 aa). Residues 38 to 57 constitute a DNA-binding region (H-T-H motif); the sequence is ENELCTQYNVSRITIRKAIS.

It functions in the pathway carbohydrate metabolism; fructoselysine degradation [regulation]. May regulate the transcription of the frlABCDR operon, involved in the utilization of fructoselysine and psicoselysine. The protein is Probable fructoselysine utilization operon transcriptional repressor of Escherichia coli (strain K12).